Here is a 73-residue protein sequence, read N- to C-terminus: Protein SlyX homolog (73 aa).

This sequence belongs to the SlyX family.

This chain is Protein SlyX homolog, found in Pasteurella multocida (strain Pm70).